The chain runs to 454 residues: MAEFSQKRGKRRSDEGLGSMVDFLLANARLVLGVGGAAVLGIATLAVKRFIDRATSPRDEDDTKADSWKELSLLKATPHLQPRPPPAALSQPVLPLAPSSSAPEGPAETDPEVTPQLSSPAPLCLTLQERLLAFERDRVTIPAAQVALAKQLAGDIALELQAYFRSKFPELPFGAFVPGGPLYDGLQAGAADHVRLLVPLVLEPGLWSLVPGVDTVARDPRCWAVRRTQLEFCPRGSSPWDRFLVGGYLSSRVLLELLRKALAASVNWPAIGSLLGCLIRPSMASEELLLEVQHERLELTVAVLVAVPGVDADDRLLLAWPLEGLAGNLWLQDLYPVEAARLRALDDHDAGTRRRLLLLLCAVCRGCSALGQLGRGHLTQVVLRLGEDNVDWTEEALGERFLQALELLIGSLEQASLPCHFNPSVNLFSSLREEEIDDIGYALYSGLQEPEGLL.

At 1–22 (MAEFSQKRGKRRSDEGLGSMVD) the chain is on the mitochondrial intermembrane side. Position 13 is a phosphoserine (Ser13). The helical transmembrane segment at 23–43 (FLLANARLVLGVGGAAVLGIA) threads the bilayer. Topologically, residues 44–454 (TLAVKRFIDR…SGLQEPEGLL (411 aa)) are cytoplasmic. Residues 76 to 119 (ATPHLQPRPPPAALSQPVLPLAPSSSAPEGPAETDPEVTPQLSS) are disordered. Residues 88-103 (ALSQPVLPLAPSSSAP) are compositionally biased toward low complexity.

The protein belongs to the MID49/MID51 family. As to quaternary structure, interacts with DNM1L. Expressed in all tissues tested with highest expression in heart and skeletal muscle.

The protein localises to the mitochondrion outer membrane. Functionally, mitochondrial outer membrane protein involved in the regulation of mitochondrial organization. It is required for mitochondrial fission and promotes the recruitment and association of the fission mediator dynamin-related protein 1 (DNM1L) to the mitochondrial surface independently of the mitochondrial fission FIS1 and MFF proteins. Regulates DNM1L GTPase activity. The sequence is that of Mitochondrial dynamics protein MID49 (MIEF2) from Homo sapiens (Human).